Reading from the N-terminus, the 230-residue chain is Uracil-DNA glycosylase (230 aa).

The active-site Proton acceptor is D70.

Belongs to the uracil-DNA glycosylase (UDG) superfamily. UNG family.

It is found in the cytoplasm. The enzyme catalyses Hydrolyzes single-stranded DNA or mismatched double-stranded DNA and polynucleotides, releasing free uracil.. Functionally, excises uracil residues from the DNA which can arise as a result of misincorporation of dUMP residues by DNA polymerase or due to deamination of cytosine. The protein is Uracil-DNA glycosylase of Pseudomonas fluorescens (strain SBW25).